Reading from the N-terminus, the 305-residue chain is Nod factor export ATP-binding protein I (305 aa).

Positions 8-237 constitute an ABC transporter domain; it reads IDLVGVRKSF…HIGCNVIEIY (230 aa). ATP is bound at residue 40-47; sequence GPNGAGKS.

This sequence belongs to the ABC transporter superfamily. Lipooligosaccharide exporter (TC 3.A.1.102) family. The complex is composed of two ATP-binding proteins (NodI) and two transmembrane proteins (NodJ).

It localises to the cell inner membrane. Part of the ABC transporter complex NodIJ involved in the export of the nodulation factors (Nod factors), the bacterial signal molecules that induce symbiosis and subsequent nodulation induction. Nod factors are LCO (lipo-chitin oligosaccharide), a modified beta-1,4-linked N-acetylglucosamine oligosaccharide. This subunit is responsible for energy coupling to the transport system. This is Nod factor export ATP-binding protein I from Bradyrhizobium sp. (strain SNU001).